A 343-amino-acid chain; its full sequence is Methionine import ATP-binding protein MetN 1 (343 aa).

Residues 2–241 enclose the ABC transporter domain; the sequence is IKLSNITKVF…PKTPLAQKFI (240 aa). ATP is bound at residue 38 to 45; that stretch reads GASGAGKS.

The protein belongs to the ABC transporter superfamily. Methionine importer (TC 3.A.1.24) family. In terms of assembly, the complex is composed of two ATP-binding proteins (MetN), two transmembrane proteins (MetI) and a solute-binding protein (MetQ).

The protein resides in the cell inner membrane. It catalyses the reaction L-methionine(out) + ATP + H2O = L-methionine(in) + ADP + phosphate + H(+). The enzyme catalyses D-methionine(out) + ATP + H2O = D-methionine(in) + ADP + phosphate + H(+). Functionally, part of the ABC transporter complex MetNIQ involved in methionine import. Responsible for energy coupling to the transport system. This Salmonella typhi protein is Methionine import ATP-binding protein MetN 1.